Here is a 430-residue protein sequence, read N- to C-terminus: MSSSYLKLDFKLKNQVVPFESYQKQVSQIHNAVKSKSVEEKDWLGWLNLASDYNKEEYAKMEEKVAQWLKDKVEVVVVIGIGGSYLGAKTGYEFIFGKYSIKKPQMELVFAGNDISAETLVAKLNYVKDKKFAINVISKSGTTLEPSIAFREFRNLLEQKEVNSWEYIVATTDKQKGVLFELATAKKYTKFVIPDDVGGRFSVLTAVGLFPFLCAGIDAKKVLEGARQMNKELFSENVMENAAYKYAVARHYLHKEKKYAVEIFVSYEPKLRYFAEWWKQLFAESEGKDGKGLWPSSAIFSTDLHSLGQMIQDGPKILFETVLTLENPAYDITFKDNVIDYDKLNYLSDKKLSEVNNVAFNATMEAHSDEGNVPNISMLFKDFSEETLGALFMFFMRAVTMSAYLLGVNPFNQPGVEVYKKNMFFLLGKK.

The active-site Proton donor is the Glu284. Residues His305 and Lys420 contribute to the active site.

It belongs to the GPI family.

Its subcellular location is the cytoplasm. It catalyses the reaction alpha-D-glucose 6-phosphate = beta-D-fructose 6-phosphate. The protein operates within carbohydrate biosynthesis; gluconeogenesis. It participates in carbohydrate degradation; glycolysis; D-glyceraldehyde 3-phosphate and glycerone phosphate from D-glucose: step 2/4. Catalyzes the reversible isomerization of glucose-6-phosphate to fructose-6-phosphate. The protein is Glucose-6-phosphate isomerase of Mycoplasmopsis synoviae (strain 53) (Mycoplasma synoviae).